A 370-amino-acid polypeptide reads, in one-letter code: UDP-galactose transporter homolog 1 (370 aa).

10 consecutive transmembrane segments (helical) span residues 22–42, 62–82, 115–135, 145–165, 175–195, 204–224, 242–262, 280–300, 307–327, and 333–353; these read ALTL…WSIL, IIIN…YNYV, CNVL…SPIG, LAYL…HFIF, YLVA…HVTT, TLLG…TNST, LMSL…IIFH, LIDI…IFII, IILI…SVIL, and SWEQ…EAFI.

The protein belongs to the nucleotide-sugar transporter family. SLC35B subfamily.

The protein localises to the endoplasmic reticulum membrane. In terms of biological role, may be involved in specific transport of UDP-Gal from the cytosol to the Golgi lumen. Involved in the maintenance of optimal conditions for the folding of secretory pathway proteins in the endoplasmic reticulum. The protein is UDP-galactose transporter homolog 1 (HUT1) of Candida albicans (strain SC5314 / ATCC MYA-2876) (Yeast).